We begin with the raw amino-acid sequence, 427 residues long: Anhydro-N-acetylmuramic acid kinase (427 aa).

Position 32 to 39 (32 to 39) interacts with ATP; it reads GTSLDGMD.

This sequence belongs to the anhydro-N-acetylmuramic acid kinase family.

The enzyme catalyses 1,6-anhydro-N-acetyl-beta-muramate + ATP + H2O = N-acetyl-D-muramate 6-phosphate + ADP + H(+). The protein operates within amino-sugar metabolism; 1,6-anhydro-N-acetylmuramate degradation. It functions in the pathway cell wall biogenesis; peptidoglycan recycling. Functionally, catalyzes the specific phosphorylation of 1,6-anhydro-N-acetylmuramic acid (anhMurNAc) with the simultaneous cleavage of the 1,6-anhydro ring, generating MurNAc-6-P. Is required for the utilization of anhMurNAc either imported from the medium or derived from its own cell wall murein, and thus plays a role in cell wall recycling. This chain is Anhydro-N-acetylmuramic acid kinase, found in Psychrobacter cryohalolentis (strain ATCC BAA-1226 / DSM 17306 / VKM B-2378 / K5).